The primary structure comprises 880 residues: MSGSLYRSPSAALYKSPSMSAFGGLPAAFGSMSVADLGSLTRLEDKIRLLQEDLESARELRNRIERERADLSVQLIALTDRLEDAEGTTDSQIESNRKREAELQKLRKLLEESQLENEDAMNILRKKHQDACLDYAEQIEQLQKKNSKIDRERQRLQHEVIELTATIDQLKKDKHLAEKAAERFEAQTVELSNKVEDLNRHVNDLAQQRQRLQAENNDLLKEIHDQKVQLDNLQHVKYQLAQQLEEARRRLEDAERERSQLQAQLHQVQLELDSVRTALDEESAARAEAEHKLALANTEITQWKSKFDAEVALHHEEVEDLRKKMLQKQAEYEEQIEIMLQKISQLEKAKSRLQSEVEVLIVDLEKAQNTIAILERAKEQLEKTVNELKVRIDELTVELEAAQREARAALAELQKLKNLYEKAVEQKEALARENKKLQDDLHEAKEALADANRKLHELDLENARLAGEIRELQTALKESEAARRDAENRAQRALAELQQLRIEMERRLQEKEEEMEALRKNMQFEIDRLTAALADAEARMKAEISRLKKKYQAEIAELEMTVDNLNRANIEAQKTIKKQSEQLKILQASLEDTQRQLQQTLDQYALAQRKVSALSAELEECKVALDNAIRARKQAEIDLEEANGRITDLVSVNNNLTAIKNKLETELSTAQADLDEATKELHAADERANRALADAARAVEQLHEEQEHSMKIDALRKSLEEQVKQLQVQFRKLKRRLLGGKRVIAKLETRIRDLETALDEETRRHKETQGALRKKDRRIKEVQMQVDEEHKMFVMAQDTADRLLEKLNIQKRQLGEAESLTMANLRVRRYQRELEDAEGRADQAESSLHLIRAKHRHQLLRAKMLQRQKFTFSKMSNRDN.

The tract at residues 1–34 is nonhelical region; it reads MSGSLYRSPSAALYKSPSMSAFGGLPAAFGSMSV. Positions 35–859 form a coiled coil; that stretch reads ADLGSLTRLE…LIRAKHRHQL (825 aa). Residues 860 to 880 form a nonhelical region region; it reads LRAKMLQRQKFTFSKMSNRDN.

The protein belongs to the paramyosin family. Homodimer.

Its subcellular location is the cytoplasm. The protein resides in the myofibril. Its function is as follows. Paramyosin is a major structural component of many thick filaments isolated from invertebrate muscles. This Brugia malayi (Filarial nematode worm) protein is Paramyosin.